Consider the following 404-residue polypeptide: Argininosuccinate synthase (404 aa).

9–17 provides a ligand contact to ATP; the sequence is AYSGGLDTS. Tyr86 contacts L-citrulline. Gly116 serves as a coordination point for ATP. L-aspartate-binding residues include Thr118, Asn122, and Asp123. Asn122 is a binding site for L-citrulline. L-citrulline-binding residues include Arg126, Ser174, Ser183, Glu259, and Tyr271.

This sequence belongs to the argininosuccinate synthase family. Type 1 subfamily. In terms of assembly, homotetramer.

The protein resides in the cytoplasm. The catalysed reaction is L-citrulline + L-aspartate + ATP = 2-(N(omega)-L-arginino)succinate + AMP + diphosphate + H(+). Its pathway is amino-acid biosynthesis; L-arginine biosynthesis; L-arginine from L-ornithine and carbamoyl phosphate: step 2/3. The polypeptide is Argininosuccinate synthase (Listeria monocytogenes serotype 4b (strain CLIP80459)).